The primary structure comprises 236 residues: Mitochondrial coenzyme A diphosphatase NUDT8 (236 aa).

One can recognise a Nudix hydrolase domain in the interval 25 to 172 (LRARPASAAV…HFRYTLPVFL (148 aa)). An N6-succinyllysine modification is found at lysine 70. Positions 70 to 91 (KCDPADQDVVHTALRETREELG) match the Nudix box motif. The Mg(2+) site is built by glutamate 85 and glutamate 89.

The protein belongs to the Nudix hydrolase family. Monomer. Mg(2+) is required as a cofactor. Requires Mn(2+) as cofactor.

Its subcellular location is the mitochondrion. The enzyme catalyses an acyl-CoA + H2O = an acyl-4'-phosphopantetheine + adenosine 3',5'-bisphosphate + 2 H(+). It carries out the reaction CoA + H2O = (R)-4'-phosphopantetheine + adenosine 3',5'-bisphosphate + 2 H(+). It catalyses the reaction acetyl-CoA + H2O = S-acetyl-4'-phosphopantetheine + adenosine 3',5'-bisphosphate + 2 H(+). The catalysed reaction is butanoyl-CoA + H2O = S-butanoyl-4'-phosphopantetheine + adenosine 3',5'-bisphosphate + 2 H(+). The enzyme catalyses hexanoyl-CoA + H2O = hexanoyl-4'-phosphopantetheine + adenosine 3',5'-bisphosphate + 2 H(+). It carries out the reaction octanoyl-CoA + H2O = S-octanoyl-4'-phosphopantetheine + adenosine 3',5'-bisphosphate + 2 H(+). It catalyses the reaction propanoyl-CoA + H2O = propanoyl-4'-phosphopantetheine + adenosine 3',5'-bisphosphate + 2 H(+). The catalysed reaction is malonyl-CoA + H2O = malonyl-4'-phosphopantetheine + adenosine 3',5'-bisphosphate + 2 H(+). The enzyme catalyses succinyl-CoA + H2O = succinyl-4'-phosphopantetheine + adenosine 3',5'-bisphosphate + 2 H(+). It carries out the reaction a 5'-end CoA-ribonucleoside in mRNA + H2O = a 5'-end phospho-adenosine-phospho-ribonucleoside in mRNA + (R)-4'-phosphopantetheine + 2 H(+). Acyl-CoA diphosphatase that mediates the hydrolysis of a wide range of CoA and CoA esters yielding 3',5'-ADP and the corresponding 4'-phosphopantetheine derivative as products. Hydrolyzes short- and medium-chain acyl-CoAs, exhibiting the highest activity toward free CoA, hexanoyl-CoA, and octanoyl-CoA and the lowest activity against acetyl-CoA. Exhibits decapping activity towards dpCoA-capped RNAs in vitro. This is Mitochondrial coenzyme A diphosphatase NUDT8 (NUDT8) from Homo sapiens (Human).